Reading from the N-terminus, the 429-residue chain is Tryptophan synthase beta chain 2 (429 aa).

A disordered region spans residues 18-40; sequence NINPDLPSPLPEPKNPEGGKNIE. Position 110 is an N6-(pyridoxal phosphate)lysine (Lys-110).

Belongs to the TrpB family. In terms of assembly, tetramer of two alpha and two beta chains. The cofactor is pyridoxal 5'-phosphate.

It catalyses the reaction (1S,2R)-1-C-(indol-3-yl)glycerol 3-phosphate + L-serine = D-glyceraldehyde 3-phosphate + L-tryptophan + H2O. The protein operates within amino-acid biosynthesis; L-tryptophan biosynthesis; L-tryptophan from chorismate: step 5/5. Functionally, the beta subunit is responsible for the synthesis of L-tryptophan from indole and L-serine. In Methanothermobacter thermautotrophicus (strain ATCC 29096 / DSM 1053 / JCM 10044 / NBRC 100330 / Delta H) (Methanobacterium thermoautotrophicum), this protein is Tryptophan synthase beta chain 2 (trpB2).